A 462-amino-acid polypeptide reads, in one-letter code: Putative F-box protein At1g12855 (462 aa).

Basic and acidic residues predominate over residues 1–22 (MESREDSFISKEKKSTMKKEKQ). The tract at residues 1–59 (MESREDSFISKEKKSTMKKEKQAIASQRNRRRVIKNRGNGKRLIASLSQRKRRRIPRGR) is disordered. Over residues 28-40 (RNRRRVIKNRGNG) the composition is skewed to basic residues. The region spanning 65–110 (VFAPSSLPNDVVEEIFLRLPVKAIIQLKSLSKQWRSTIESRSFEER) is the F-box domain.

The polypeptide is Putative F-box protein At1g12855 (Arabidopsis thaliana (Mouse-ear cress)).